A 289-amino-acid polypeptide reads, in one-letter code: MKLCGFEVGLDKPFFLIAGPCVIESEQMALDTAGELKAITTELGIPFIYKSSFDKANRSSGKSFRGLGMEKGLEILAHVKREIGVPVLTDIHEIDEIKPVAAVVDVLQTPAFLCRQTDFIRACAQSGKPVNIKKGQFLAPHDMKNVIDKARDAAREAGLPDDVFMACERGVSFGYNNLVSDMRSLAIMRETGAPVVFDATHSVQLPGGQGTSSGGQREFVPVLSRAAVATGVAGLFMETHPDPSKAMSDGPNAVPLSRMKELLTVLKELDTLVKRAGFLEDNFGWPACA.

It belongs to the KdsA family.

It is found in the cytoplasm. It catalyses the reaction D-arabinose 5-phosphate + phosphoenolpyruvate + H2O = 3-deoxy-alpha-D-manno-2-octulosonate-8-phosphate + phosphate. The protein operates within carbohydrate biosynthesis; 3-deoxy-D-manno-octulosonate biosynthesis; 3-deoxy-D-manno-octulosonate from D-ribulose 5-phosphate: step 2/3. It participates in bacterial outer membrane biogenesis; lipopolysaccharide biosynthesis. This chain is 2-dehydro-3-deoxyphosphooctonate aldolase, found in Cupriavidus taiwanensis (strain DSM 17343 / BCRC 17206 / CCUG 44338 / CIP 107171 / LMG 19424 / R1) (Ralstonia taiwanensis (strain LMG 19424)).